Reading from the N-terminus, the 388-residue chain is MNLHEYQAKQLFAEYGLPVPEGYACDTAQEAFEAAGRISTAKKVVKCQVHAGGRGKAGGVELHDTKEGVKEFAQKWLGKNLVTFQTDAKGQPVTKVLVEEASNIANELYLGAVVDRATRRIVFMASTEGGVDIEKIAEETPELIHQAAIDPLVGPQAFQGRELAFKLGLEGDQIKQFVKIFLGLGNMFAQYDLALLEINPLVVTAEGNLLCLDGKINIDSNAMYRQPKLREMHDPSQEDEREAHAAQWELNYVALDGSIGCMVNGAGLAMGTMDIVNLHGGQPANFLDVGGGATKERVTEAFKIILSDSNVKAVLVNIFGGIVRCDLIADGIIGAVEEVGVKVPVVVRLEGNNAPLGSQKLAESGLNIIAATSLTEAAEKVVAAAEGK.

The ATP-grasp domain occupies 9–244 (KQLFAEYGLP…PSQEDEREAH (236 aa)). Residues Lys-46, 53 to 55 (GRG), Glu-99, Ser-102, and Glu-107 each bind ATP. The Mg(2+) site is built by Asn-199 and Asp-213. Substrate is bound by residues Asn-264 and 321-323 (GIV).

This sequence belongs to the succinate/malate CoA ligase beta subunit family. As to quaternary structure, heterotetramer of two alpha and two beta subunits. The cofactor is Mg(2+).

It carries out the reaction succinate + ATP + CoA = succinyl-CoA + ADP + phosphate. It catalyses the reaction GTP + succinate + CoA = succinyl-CoA + GDP + phosphate. Its pathway is carbohydrate metabolism; tricarboxylic acid cycle; succinate from succinyl-CoA (ligase route): step 1/1. In terms of biological role, succinyl-CoA synthetase functions in the citric acid cycle (TCA), coupling the hydrolysis of succinyl-CoA to the synthesis of either ATP or GTP and thus represents the only step of substrate-level phosphorylation in the TCA. The beta subunit provides nucleotide specificity of the enzyme and binds the substrate succinate, while the binding sites for coenzyme A and phosphate are found in the alpha subunit. This Aliivibrio salmonicida (strain LFI1238) (Vibrio salmonicida (strain LFI1238)) protein is Succinate--CoA ligase [ADP-forming] subunit beta.